The chain runs to 684 residues: Glycine--tRNA ligase beta subunit (684 aa).

Belongs to the class-II aminoacyl-tRNA synthetase family. In terms of assembly, tetramer of two alpha and two beta subunits.

The protein localises to the cytoplasm. The enzyme catalyses tRNA(Gly) + glycine + ATP = glycyl-tRNA(Gly) + AMP + diphosphate. The polypeptide is Glycine--tRNA ligase beta subunit (Pseudomonas aeruginosa (strain ATCC 15692 / DSM 22644 / CIP 104116 / JCM 14847 / LMG 12228 / 1C / PRS 101 / PAO1)).